Reading from the N-terminus, the 202-residue chain is V-type ATP synthase subunit D (202 aa).

Belongs to the V-ATPase D subunit family.

Functionally, produces ATP from ADP in the presence of a proton gradient across the membrane. The sequence is that of V-type ATP synthase subunit D (atpD) from Borreliella burgdorferi (strain ATCC 35210 / DSM 4680 / CIP 102532 / B31) (Borrelia burgdorferi).